A 170-amino-acid polypeptide reads, in one-letter code: MNLKEFVVDVKDFPQKGIIFKDITPLLNNKDAFKYMIDTIAEFVKQLDVDVIVAPEARGFLLASAVAYATNKRFVLVRKPNKLPREVYDVEYSLEYGTNHQQIHKEDLKPNDKVVVIDDVLATGGTMQAIIDLVKLSKAEVVGMSFLIDLTFLHKEDLFSEYQVQKLIKY.

The protein belongs to the purine/pyrimidine phosphoribosyltransferase family. As to quaternary structure, homodimer.

It localises to the cytoplasm. It carries out the reaction AMP + diphosphate = 5-phospho-alpha-D-ribose 1-diphosphate + adenine. It participates in purine metabolism; AMP biosynthesis via salvage pathway; AMP from adenine: step 1/1. Functionally, catalyzes a salvage reaction resulting in the formation of AMP, that is energically less costly than de novo synthesis. The sequence is that of Adenine phosphoribosyltransferase from Mycoplasma capricolum subsp. capricolum (strain California kid / ATCC 27343 / NCTC 10154).